Here is a 339-residue protein sequence, read N- to C-terminus: N-acetyl-gamma-glutamyl-phosphate reductase (339 aa).

Cys145 is an active-site residue.

The protein belongs to the NAGSA dehydrogenase family. Type 1 subfamily.

The protein resides in the cytoplasm. The catalysed reaction is N-acetyl-L-glutamate 5-semialdehyde + phosphate + NADP(+) = N-acetyl-L-glutamyl 5-phosphate + NADPH + H(+). The protein operates within amino-acid biosynthesis; L-arginine biosynthesis; N(2)-acetyl-L-ornithine from L-glutamate: step 3/4. Catalyzes the NADPH-dependent reduction of N-acetyl-5-glutamyl phosphate to yield N-acetyl-L-glutamate 5-semialdehyde. The protein is N-acetyl-gamma-glutamyl-phosphate reductase of Thermotoga sp. (strain RQ2).